The sequence spans 511 residues: Bifunctional purine biosynthesis protein PurH (511 aa).

Residues 1-145 enclose the MGS-like domain; it reads MKKRALVSVS…KNHKFVSVIV (145 aa).

The protein belongs to the PurH family.

The enzyme catalyses (6R)-10-formyltetrahydrofolate + 5-amino-1-(5-phospho-beta-D-ribosyl)imidazole-4-carboxamide = 5-formamido-1-(5-phospho-D-ribosyl)imidazole-4-carboxamide + (6S)-5,6,7,8-tetrahydrofolate. It catalyses the reaction IMP + H2O = 5-formamido-1-(5-phospho-D-ribosyl)imidazole-4-carboxamide. It participates in purine metabolism; IMP biosynthesis via de novo pathway; 5-formamido-1-(5-phospho-D-ribosyl)imidazole-4-carboxamide from 5-amino-1-(5-phospho-D-ribosyl)imidazole-4-carboxamide (10-formyl THF route): step 1/1. It functions in the pathway purine metabolism; IMP biosynthesis via de novo pathway; IMP from 5-formamido-1-(5-phospho-D-ribosyl)imidazole-4-carboxamide: step 1/1. The chain is Bifunctional purine biosynthesis protein PurH from Bacillus cereus (strain Q1).